Consider the following 120-residue polypeptide: Accessory gland protein Acp53Ea (120 aa).

A signal peptide spans methionine 1–alanine 23.

As to expression, main cells of accessory gland and seminal fluid.

It is found in the secreted. Responsible for physiological and behavioral changes in mated female flies. This chain is Accessory gland protein Acp53Ea (Acp53Ea), found in Drosophila melanogaster (Fruit fly).